We begin with the raw amino-acid sequence, 805 residues long: Leucine--tRNA ligase (805 aa).

Positions proline 40 to histidine 51 match the 'HIGH' region motif. The short motif at lysine 576 to serine 580 is the 'KMSKS' region element. Lysine 579 is a binding site for ATP.

This sequence belongs to the class-I aminoacyl-tRNA synthetase family.

It localises to the cytoplasm. The enzyme catalyses tRNA(Leu) + L-leucine + ATP = L-leucyl-tRNA(Leu) + AMP + diphosphate. In Geobacillus thermodenitrificans (strain NG80-2), this protein is Leucine--tRNA ligase.